The sequence spans 132 residues: Fatty acid-binding protein, adipocyte (132 aa).

Cysteine 2 is modified (N-acetylcysteine). Serine 13 carries the phosphoserine modification. At tyrosine 20 the chain carries Phosphotyrosine; by Tyr-kinases. Residues 22–32 carry the Nuclear localization signal motif; that stretch reads KEVGVGFATRK. Position 127–129 (127–129) interacts with a fatty acid; the sequence is RVY.

It belongs to the calycin superfamily. Fatty-acid binding protein (FABP) family. Monomer. Homodimer. Interacts with PPARG.

The protein localises to the cytoplasm. It localises to the nucleus. Lipid transport protein in adipocytes. Binds both long chain fatty acids and retinoic acid. Delivers long-chain fatty acids and retinoic acid to their cognate receptors in the nucleus. The polypeptide is Fatty acid-binding protein, adipocyte (Fabp4) (Rattus norvegicus (Rat)).